The following is a 767-amino-acid chain: Polyketide biosynthesis protein PksE (767 aa).

The tract at residues 1–312 (MITYVFPGQG…QRNVQAGITA (312 aa)) is acyl transferase. Catalysis depends on residues serine 87 and histidine 193.

The protein in the N-terminal section; belongs to the FabD family.

It localises to the cytoplasm. It carries out the reaction holo-[ACP] + malonyl-CoA = malonyl-[ACP] + CoA. Its pathway is antibiotic biosynthesis; bacillaene biosynthesis. Probably involved in some intermediate steps for the synthesis of the antibiotic polyketide bacillaene which is involved in secondary metabolism. Probably has an acyl transferase activity and could also have a flavin mononucleotide-dependent oxidoreductase activity. In Bacillus subtilis (strain 168), this protein is Polyketide biosynthesis protein PksE (pksE).